The following is a 171-amino-acid chain: ATP synthase subunit b (171 aa).

A helical transmembrane segment spans residues 2-22 (FLVKMVLGFLIFLSPLCATGL).

This sequence belongs to the ATPase B chain family. In terms of assembly, F-type ATPases have 2 components, F(1) - the catalytic core - and F(0) - the membrane proton channel. F(1) has five subunits: alpha(3), beta(3), gamma(1), delta(1), epsilon(1). F(0) has three main subunits: a(1), b(2) and c(10-14). The alpha and beta chains form an alternating ring which encloses part of the gamma chain. F(1) is attached to F(0) by a central stalk formed by the gamma and epsilon chains, while a peripheral stalk is formed by the delta and b chains.

It localises to the cell inner membrane. In terms of biological role, f(1)F(0) ATP synthase produces ATP from ADP in the presence of a proton or sodium gradient. F-type ATPases consist of two structural domains, F(1) containing the extramembraneous catalytic core and F(0) containing the membrane proton channel, linked together by a central stalk and a peripheral stalk. During catalysis, ATP synthesis in the catalytic domain of F(1) is coupled via a rotary mechanism of the central stalk subunits to proton translocation. Component of the F(0) channel, it forms part of the peripheral stalk, linking F(1) to F(0). This Helicobacter pylori (strain Shi470) protein is ATP synthase subunit b.